The sequence spans 545 residues: CTP synthase (545 aa).

The amidoligase domain stretch occupies residues 1 to 266 (MKTNYIFVTG…DDYICKRFSL (266 aa)). Residue S14 coordinates CTP. A UTP-binding site is contributed by S14. ATP is bound by residues 15 to 20 (SLGKGI) and D72. D72 and E140 together coordinate Mg(2+). Residues 147-149 (DIE), 187-192 (KTKPTQ), and K223 contribute to the CTP site. UTP contacts are provided by residues 187 to 192 (KTKPTQ) and K223. Position 239–241 (239–241 (KDV)) interacts with ATP. The Glutamine amidotransferase type-1 domain occupies 291-542 (TIGMVGKYVE…VKAAFDYQKG (252 aa)). Residue G352 coordinates L-glutamine. Residue C379 is the Nucleophile; for glutamine hydrolysis of the active site. Residues 380-383 (LGMQ), E403, and R470 contribute to the L-glutamine site. Catalysis depends on residues H515 and E517.

This sequence belongs to the CTP synthase family. Homotetramer.

The enzyme catalyses UTP + L-glutamine + ATP + H2O = CTP + L-glutamate + ADP + phosphate + 2 H(+). It carries out the reaction L-glutamine + H2O = L-glutamate + NH4(+). The catalysed reaction is UTP + NH4(+) + ATP = CTP + ADP + phosphate + 2 H(+). The protein operates within pyrimidine metabolism; CTP biosynthesis via de novo pathway; CTP from UDP: step 2/2. Allosterically activated by GTP, when glutamine is the substrate; GTP has no effect on the reaction when ammonia is the substrate. The allosteric effector GTP functions by stabilizing the protein conformation that binds the tetrahedral intermediate(s) formed during glutamine hydrolysis. Inhibited by the product CTP, via allosteric rather than competitive inhibition. Its function is as follows. Catalyzes the ATP-dependent amination of UTP to CTP with either L-glutamine or ammonia as the source of nitrogen. Regulates intracellular CTP levels through interactions with the four ribonucleotide triphosphates. In Proteus mirabilis (strain HI4320), this protein is CTP synthase.